Here is a 207-residue protein sequence, read N- to C-terminus: Guanylate kinase (207 aa).

The Guanylate kinase-like domain maps to 7–185 (GIVLVLCAPS…AYDELRAAYI (179 aa)). Residue 14 to 21 (APSGTGKT) participates in ATP binding.

This sequence belongs to the guanylate kinase family.

The protein resides in the cytoplasm. The catalysed reaction is GMP + ATP = GDP + ADP. Functionally, essential for recycling GMP and indirectly, cGMP. In Nitratidesulfovibrio vulgaris (strain ATCC 29579 / DSM 644 / CCUG 34227 / NCIMB 8303 / VKM B-1760 / Hildenborough) (Desulfovibrio vulgaris), this protein is Guanylate kinase.